We begin with the raw amino-acid sequence, 178 residues long: Caveolin-1 (178 aa).

N-acetylserine is present on Ser2. Residue Ser2 is modified to Phosphoserine. The required for homooligomerization stretch occupies residues 2–94 (SGGKYVDSEG…WKASFTTFTV (93 aa)). Residues 2-104 (SGGKYVDSEG…TKYWFYRLLS (103 aa)) lie on the Cytoplasmic side of the membrane. At Lys5 the chain carries N6-acetyllysine; alternate. A Glycyl lysine isopeptide (Lys-Gly) (interchain with G-Cter in ubiquitin); alternate cross-link involves residue Lys5. A Phosphotyrosine modification is found at Tyr6. Ser9 bears the Phosphoserine mark. Position 14 is a phosphotyrosine; by ABL1 (Tyr14). Phosphotyrosine is present on Tyr25. Glycyl lysine isopeptide (Lys-Gly) (interchain with G-Cter in ubiquitin) cross-links involve residues Lys26, Lys30, Lys39, Lys47, and Lys57. An interaction with CAVIN3 region spans residues 82–94 (DGIWKASFTTFTV). The segment at residues 105–125 (ALFGIPMALIWGIYFAILSFL) is an intramembrane region (helical). The Cytoplasmic segment spans residues 126–178 (HIWAVVPCIKSFLIEIQCISRVYSIYVHTFCDPFFEAVGKIFSNIRINMQKEI). The segment at 131–142 (VPCIKSFLIEIQ) is interacts with SPRY1, SPRY2, SPRY3 and SPRY4. Residues Cys133, Cys143, and Cys156 are each lipidated (S-palmitoyl cysteine). The tract at residues 149 to 160 (SIYVHTFCDPFF) is interacts with SPRY1, SPRY2, and SPRY4. Residues 167 to 178 (FSNIRINMQKEI) are interacts with SPRY1, SPRY2, SPRY3 and SPRY4.

Belongs to the caveolin family. Homooligomer. Interacts with GLIPR2. Interacts with NOSTRIN. Interacts with SNAP25 and STX1A. Interacts (via the N-terminus) with DPP4; the interaction is direct. Interacts with CTNNB1, CDH1 and JUP. Interacts with PACSIN2; this interaction induces membrane tubulation. Interacts with SLC7A9. Interacts with BMX and BTK. Interacts with TGFBR1. Interacts with CAVIN3 (via leucine-zipper domain) in a cholesterol-sensitive manner. Interacts with CAVIN1. Interacts with EHD2 in a cholesterol-dependent manner. Forms a ternary complex with UBXN6 and VCP; mediates CAV1 targeting to lysosomes for degradation. Interacts with ABCG1; this interaction regulates ABCG1-mediated cholesterol efflux. Interacts with NEU3; this interaction enhances NEU3 sialidase activity within caveola. Interacts (via C-terminus) with SPRY1, SPRY2 (via C-terminus), SPRY3, and SPRY4. Interacts with IGFBP5; this interaction allows trafficking of IGFBP5 from the plasma membrane to the nucleus. In terms of processing, phosphorylated at Tyr-14 by ABL1 in response to oxidative stress. Ubiquitinated. Undergo monoubiquitination and multi- and/or polyubiquitination. Monoubiquitination of N-terminal lysines promotes integration in a ternary complex with UBXN6 and VCP which promotes oligomeric CAV1 targeting to lysosomes for degradation. Ubiquitinated by ZNRF1; leading to degradation and modulation of the TLR4-mediated immune response.

The protein resides in the golgi apparatus membrane. The protein localises to the cell membrane. Its subcellular location is the membrane. It is found in the caveola. It localises to the membrane raft. Its function is as follows. May act as a scaffolding protein within caveolar membranes. Forms a stable heterooligomeric complex with CAV2 that targets to lipid rafts and drives caveolae formation. Mediates the recruitment of CAVIN proteins (CAVIN1/2/3/4) to the caveolae. Interacts directly with G-protein alpha subunits and can functionally regulate their activity. Involved in the costimulatory signal essential for T-cell receptor (TCR)-mediated T-cell activation. Its binding to DPP4 induces T-cell proliferation and NF-kappa-B activation in a T-cell receptor/CD3-dependent manner. Recruits CTNNB1 to caveolar membranes and may regulate CTNNB1-mediated signaling through the Wnt pathway. Negatively regulates TGFB1-mediated activation of SMAD2/3 by mediating the internalization of TGFBR1 from membrane rafts leading to its subsequent degradation. Binds 20(S)-hydroxycholesterol (20(S)-OHC). The polypeptide is Caveolin-1 (CAV1) (Felis catus (Cat)).